Here is a 749-residue protein sequence, read N- to C-terminus: Cytosolic phospholipase A2 (749 aa).

The phospholipid binding stretch occupies residues 1–178; the sequence is MSFIDPYQHI…MKKLLGPKNS (178 aa). Ser-2 carries the post-translational modification Phosphoserine. Residues 6-122 enclose the C2 domain; sequence PYQHIIVEHH…KVGEKKQVPF (117 aa). Ca(2+) contacts are provided by Asp-40, Thr-41, Asp-43, Asn-65, Asp-93, Ala-94, and Asn-95. Positions 140–740 constitute a PLA2c domain; sequence SSPDLRFSMA…SSVEARRFFN (601 aa). Catalysis depends on Ser-228, which acts as the Nucleophile. Residue Thr-268 is modified to Phosphothreonine. The segment at 426-458 is disordered; it reads AKHIVSNDSSDSDDESQGPKGTEHEEAEREYQN. Phosphoserine occurs at positions 434, 435, and 437. Over residues 446–457 the composition is skewed to basic and acidic residues; the sequence is GTEHEEAEREYQ. The residue at position 505 (Ser-505) is a Phosphoserine; by MAPK. Phosphoserine is present on Ser-515. Lys-541 is covalently cross-linked (Glycyl lysine isopeptide (Lys-Gly) (interchain with G-Cter in SUMO2)). Catalysis depends on Asp-549, which acts as the Proton acceptor. A Glycyl lysine isopeptide (Lys-Gly) (interchain with G-Cter in SUMO2) cross-link involves residue Lys-606. A phosphoserine mark is found at Ser-727 and Ser-729.

Interacts with KAT5. In terms of processing, phosphorylated at both Ser-505 and Ser-727 in response to mitogenic stimuli. As to expression, detected in granulosa cells after stimulation with chorionic gonadotropin (at protein level).

The protein resides in the cytoplasm. It is found in the golgi apparatus membrane. The protein localises to the nucleus envelope. The catalysed reaction is a 1,2-diacyl-sn-glycero-3-phosphocholine + H2O = a 1-acyl-sn-glycero-3-phosphocholine + a fatty acid + H(+). It catalyses the reaction a 1-O-alkyl-2-acyl-sn-glycero-3-phosphocholine + H2O = a 1-O-alkyl-sn-glycero-3-phosphocholine + a fatty acid + H(+). It carries out the reaction a 1-acyl-sn-glycero-3-phosphocholine + H2O = sn-glycerol 3-phosphocholine + a fatty acid + H(+). The enzyme catalyses 1-hexadecanoyl-2-(5Z,8Z,11Z,14Z-eicosatetraenoyl)-sn-glycero-3-phosphocholine + H2O = 1-hexadecanoyl-sn-glycero-3-phosphocholine + (5Z,8Z,11Z,14Z)-eicosatetraenoate + H(+). The catalysed reaction is 1,2-di-(5Z,8Z,11Z,14Z-eicosatetraenoyl)-sn-glycero-3-phosphocholine + H2O = 1-(5Z,8Z,11Z,14Z-eicosatetraenoyl)-sn-glycero-3-phosphocholine + (5Z,8Z,11Z,14Z)-eicosatetraenoate + H(+). It catalyses the reaction 1-octadecanoyl-2-(5Z,8Z,11Z,14Z-eicosatetraenoyl)-sn-glycero-3-phosphocholine + H2O = 1-octadecanoyl-sn-glycero-3-phosphocholine + (5Z,8Z,11Z,14Z)-eicosatetraenoate + H(+). It carries out the reaction 1-hexadecanoyl-2-(9Z,12Z-octadecadienoyl)-sn-glycero-3-phosphocholine + H2O = (9Z,12Z)-octadecadienoate + 1-hexadecanoyl-sn-glycero-3-phosphocholine + H(+). The enzyme catalyses 1-octadecanoyl-2-(9Z,12Z,15Z-octadecatrienoyl)-sn-glycero-3-phosphocholine + H2O = (9Z,12Z,15Z)-octadecatrienoate + 1-octadecanoyl-sn-glycero-3-phosphocholine + H(+). The catalysed reaction is 1-(5Z,8Z,11Z,14Z-eicosatetraenoyl)-2-hexadecanoyl-sn-glycero-3-phosphocholine + H2O = 1-(5Z,8Z,11Z,14Z-eicosatetraenoyl)-sn-glycero-3-phosphocholine + hexadecanoate + H(+). It catalyses the reaction 1-O-hexadecyl-2-(5Z,8Z,11Z,14Z)-eicosatetraenoyl-sn-glycero-3-phosphocholine + H2O = 1-O-hexadecyl-sn-glycero-3-phosphocholine + (5Z,8Z,11Z,14Z)-eicosatetraenoate + H(+). It carries out the reaction 1,2-di-(9Z-octadecenoyl)-sn-glycero-3-phospho-(1'-sn-glycerol) + H2O = 1-(9Z-octadecenoyl)-sn-glycero-3-phospho-(1'-sn-glycerol) + (9Z)-octadecenoate + H(+). The enzyme catalyses 1-octadecanoyl-2-(5Z,8Z,11Z,14Z-eicosatetraenoyl)-sn-glycero-3-phosphate + H2O = 1-octadecanoyl-sn-glycero-3-phosphate + (5Z,8Z,11Z,14Z)-eicosatetraenoate + H(+). The catalysed reaction is 1-hexadecanoyl-sn-glycero-3-phosphocholine + H2O = sn-glycerol 3-phosphocholine + hexadecanoate + H(+). It catalyses the reaction 2-(prostaglandin E2)-sn-glycero-3-phosphoethanolamine + H2O = sn-glycero-3-phosphoethanolamine + prostaglandin E2 + H(+). It carries out the reaction 2-[(15S)-hydroxy-(5Z,8Z,11Z,13E)-eicosatetraenoyl]-sn-glycero-3-phosphocholine + H2O = (15S)-hydroxy-(5Z,8Z,11Z,13E)-eicosatetraenoate + sn-glycerol 3-phosphocholine + H(+). The enzyme catalyses 2-[(15R)-hydroxy-(5Z,8Z,11Z,13E)-eicosatetraenoyl]-sn-glycero-3-phosphocholine + H2O = (15R)-hydroxy-(5Z,8Z,11Z,13E)-eicosatetraenoate + sn-glycerol 3-phosphocholine + H(+). The catalysed reaction is 2-(prostaglandin E2)-sn-glycero-3-phosphocholine + H2O = prostaglandin E2 + sn-glycerol 3-phosphocholine + H(+). It catalyses the reaction 2-[(11R)-hydroxy-(5Z,8Z,12E,14Z)-eicosatetraenoyl]-sn-glycero-3-phosphocholine + H2O = (11R)-hydroxy-(5Z,8Z,12E,14Z)-eicosatetraenoate + sn-glycerol 3-phosphocholine + H(+). It carries out the reaction 1-(5Z,8Z,11Z,14Z-eicosatetraenoyl)-2-O-hexadecyl-sn-glycero-3-phosphocholine + H2O = 2-O-hexadecyl-sn-glycero-3-phosphocholine + (5Z,8Z,11Z,14Z)-eicosatetraenoate + H(+). The enzyme catalyses 1-octadecanoyl-2-(5Z,8Z,11Z,14Z-eicosatetraenoyl)-sn-glycero-3-phosphocholine + glycerol = 1-(5Z,8Z,11Z,14Z-eicosatetraenoyl)-glycerol + 1-octadecanoyl-sn-glycero-3-phosphocholine. The catalysed reaction is 1-octadecanoyl-2-(9Z,12Z,15Z-octadecatrienoyl)-sn-glycero-3-phosphocholine + glycerol = 1-(9Z,12Z,15Z-octadecatrienoyl)-glycerol + 1-octadecanoyl-sn-glycero-3-phosphocholine. The protein operates within membrane lipid metabolism; glycerophospholipid metabolism. It participates in lipid metabolism; arachidonate metabolism. It functions in the pathway lipid metabolism; prostaglandin biosynthesis. Its pathway is lipid metabolism; leukotriene B4 biosynthesis. Activated by cytosolic calcium, which is necessary for binding to membrane lipids. Activated by phosphorylation in response to mitogenic stimuli. In terms of biological role, has primarily calcium-dependent phospholipase and lysophospholipase activities, with a major role in membrane lipid remodeling and biosynthesis of lipid mediators of the inflammatory response. Plays an important role in embryo implantation and parturition through its ability to trigger prostanoid production. Preferentially hydrolyzes the ester bond of the fatty acyl group attached at sn-2 position of phospholipids (phospholipase A2 activity). Selectively hydrolyzes sn-2 arachidonoyl group from membrane phospholipids, providing the precursor for eicosanoid biosynthesis via the cyclooxygenase pathway. In an alternative pathway of eicosanoid biosynthesis, hydrolyzes sn-2 fatty acyl chain of eicosanoid lysophopholipids to release free bioactive eicosanoids. Hydrolyzes the ester bond of the fatty acyl group attached at sn-1 position of phospholipids (phospholipase A1 activity) only if an ether linkage rather than an ester linkage is present at the sn-2 position. This hydrolysis is not stereospecific. Has calcium-independent phospholipase A2 and lysophospholipase activities in the presence of phosphoinositides. Has O-acyltransferase activity. Catalyzes the transfer of fatty acyl chains from phospholipids to a primary hydroxyl group of glycerol (sn-1 or sn-3), potentially contributing to monoacylglycerol synthesis. The sequence is that of Cytosolic phospholipase A2 (PLA2G4A) from Bos taurus (Bovine).